Consider the following 2157-residue polypeptide: Polyketide synthase 2 (2157 aa).

The segment at 7 to 244 (FIFGDQTGGF…IPIPIWAPYH (238 aa)) is N-terminal acylcarrier protein transacylase domain (SAT). The Ketosynthase family 3 (KS3) domain occupies 374 to 807 (DSKIAIIGMS…GGNSALLLED (434 aa)). Active-site for beta-ketoacyl synthase activity residues include Cys-546, His-681, and His-723. Positions 908–1213 (GFVFSGQGAQ…ASLHRKDDGW (306 aa)) are malonyl-CoA:ACP transacylase (MAT) domain. Catalysis depends on Ser-998, which acts as the For acyl/malonyl transferase activity. The product template (PT) domain stretch occupies residues 1290–1605 (TSSVQKIIRQ…RSLLNKVLPP (316 aa)). The segment at 1294-1428 (QKIIRQTDGP…CLLRFADPTS (135 aa)) is N-terminal hotdog fold. The region spanning 1294 to 1600 (QKIIRQTDGP…FLGMSRSLLN (307 aa)) is the PKS/mFAS DH domain. Catalysis depends on His-1327, which acts as the Proton acceptor; for dehydratase activity. Positions 1455–1600 (TDSLLSRGIV…FLGMSRSLLN (146 aa)) are C-terminal hotdog fold. The active-site Proton donor; for dehydratase activity is the Asp-1514. The tract at residues 1626–1652 (AASAKDTERRPLDIPTRAQRQPSSAQT) is disordered. Over residues 1643–1652 (AQRQPSSAQT) the composition is skewed to polar residues. Residues 1649 to 1726 (SAQTGTMGRI…ELKAFLGADQ (78 aa)) enclose the Carrier 1 domain. O-(pantetheine 4'-phosphoryl)serine is present on Ser-1686. The segment at 1733–1762 (ACESSNGQHTPQTSDKGSGTLAVQKTDDDT) is disordered. The segment covering 1735–1755 (ESSNGQHTPQTSDKGSGTLAV) has biased composition (polar residues). The 75-residue stretch at 1765 to 1839 (DMTLNRVCAI…SLQKALCGSE (75 aa)) folds into the Carrier 2 domain. At Ser-1799 the chain carries O-(pantetheine 4'-phosphoryl)serine. Positions 1840-1859 (AASNGAPEANETTPSSHRLE) are disordered. Positions 1875–2151 (ASPPHATSIL…MIEMGNLIGE (277 aa)) are thioesterase (TE) domain. Ser-1981 acts as the For thioesterase activity in catalysis.

Functionally, polyketide synthase; part of the Pks2 gene cluster that mediates the formation of infectious structures (appressoria), enabling these fungi to kill insects faster. The product of the Pks2 gene cluster is different from the one of Pks1 and has still not been identified. The sequence is that of Polyketide synthase 2 from Metarhizium robertsii (strain ARSEF 23 / ATCC MYA-3075) (Metarhizium anisopliae (strain ARSEF 23)).